Here is a 189-residue protein sequence, read N- to C-terminus: UPF0232 protein MLBr00004 (189 aa).

Residues 59-78 (TDRRRNWSGPGPDVRDPQPL) are disordered.

It belongs to the UPF0232 family.

This is UPF0232 protein MLBr00004 from Mycobacterium leprae (strain Br4923).